A 422-amino-acid chain; its full sequence is UPF0229 protein SO_2883 (422 aa).

The segment at 60–111 is disordered; that stretch reads SEPMFHQGKGGVRDRVHPGNDQFTRGDKIDRPQGGSGGGAGKGDASDSGEGN. The span at 70–90 shows a compositional bias: basic and acidic residues; that stretch reads GVRDRVHPGNDQFTRGDKIDR.

The protein belongs to the UPF0229 family.

This is UPF0229 protein SO_2883 from Shewanella oneidensis (strain ATCC 700550 / JCM 31522 / CIP 106686 / LMG 19005 / NCIMB 14063 / MR-1).